Reading from the N-terminus, the 206-residue chain is Large ribosomal subunit protein uL3 (206 aa).

A disordered region spans residues 127-151 (SGGPSSHGSKFHRHLGGTGQATTPA).

Belongs to the universal ribosomal protein uL3 family. Part of the 50S ribosomal subunit. Forms a cluster with proteins L14 and L19.

In terms of biological role, one of the primary rRNA binding proteins, it binds directly near the 3'-end of the 23S rRNA, where it nucleates assembly of the 50S subunit. The chain is Large ribosomal subunit protein uL3 from Borrelia garinii subsp. bavariensis (strain ATCC BAA-2496 / DSM 23469 / PBi) (Borreliella bavariensis).